Here is a 27-residue protein sequence, read N- to C-terminus: Phospholipase A2 taicatoxin (27 aa).

The protein belongs to the phospholipase A2 family. Group I subfamily. In terms of assembly, heterotrimer composed of an alpha-neurotoxin-like peptide of 8 kDa (AC P0CJ35), this neurotoxic phospholipase of 16 kDa and a serine protease inhibitor of 7 kDa (AC B7S4N9) at an approximate stoichiometry of 1:1:4; non-covalently linked. It depends on Ca(2+) as a cofactor. Contains 7 disulfide bonds. As to expression, expressed by the venom gland.

The protein localises to the secreted. It catalyses the reaction a 1,2-diacyl-sn-glycero-3-phosphocholine + H2O = a 1-acyl-sn-glycero-3-phosphocholine + a fatty acid + H(+). Functionally, heterotrimer: blocks the voltage-dependent L-type calcium channels from the heart, and the small conductance calcium-activated potassium channels in the chromaffin cells and in the brain. Is very toxic to mice. Its function is as follows. Monomer: Snake venom phospholipase A2 (PLA2) that has neurotoxic activities. Voltage-dependently affects ionic currents in chick (Gallus domesticus) dorsal root ganglion cells. PLA2 catalyzes the calcium-dependent hydrolysis of the 2-acyl groups in 3-sn-phosphoglycerides. In Oxyuranus scutellatus scutellatus (Australian taipan), this protein is Phospholipase A2 taicatoxin.